Consider the following 188-residue polypeptide: Peptidyl-tRNA hydrolase (188 aa).

Residue F14 participates in tRNA binding. H19 (proton acceptor) is an active-site residue. 3 residues coordinate tRNA: Y64, N66, and N112.

This sequence belongs to the PTH family. As to quaternary structure, monomer.

The protein resides in the cytoplasm. It catalyses the reaction an N-acyl-L-alpha-aminoacyl-tRNA + H2O = an N-acyl-L-amino acid + a tRNA + H(+). Hydrolyzes ribosome-free peptidyl-tRNAs (with 1 or more amino acids incorporated), which drop off the ribosome during protein synthesis, or as a result of ribosome stalling. Functionally, catalyzes the release of premature peptidyl moieties from peptidyl-tRNA molecules trapped in stalled 50S ribosomal subunits, and thus maintains levels of free tRNAs and 50S ribosomes. The sequence is that of Peptidyl-tRNA hydrolase from Aster yellows witches'-broom phytoplasma (strain AYWB).